We begin with the raw amino-acid sequence, 56 residues long: Light-harvesting protein B-880 beta chain (56 aa).

Over Ala1 to Gly22 the chain is Cytoplasmic. Positions 21 and 39 each coordinate a bacteriochlorophyll. A helical transmembrane segment spans residues Val23–Trp45. The Periplasmic segment spans residues Arg46 to Ala56.

This sequence belongs to the antenna complex beta subunit family. In terms of assembly, the core complex is formed by different alpha and beta chains, binding bacteriochlorophyll molecules, and arranged most probably in tetrameric structures disposed around the reaction center. The non-pigmented gamma chains may constitute additional components.

The protein resides in the cell inner membrane. In terms of biological role, antenna complexes are light-harvesting systems, which transfer the excitation energy to the reaction centers. The polypeptide is Light-harvesting protein B-880 beta chain (Afifella marina (Rhodobium marinum)).